The chain runs to 428 residues: MFIDKAKVFIKSGKGGDGAISFRREKYVPLGGPNGGDGGDGGDIILQVDTGITTLLDFKYKKKFIAEDGENGGASKCYGRAGQDLIIKVPMGTIIREEESNKVIVDLSKKGQEFVLVRGGRGGKGNTKFATATRQAPHYAEPGMPGEELSIVLELKLLADVGLLGFPNVGKSTLLSMTTKATPKIANYHFTTLKPNLGVVAIDGIEPFVMADIPGIIEGAAEGVGLGIQFLKHIERTRLLVHIVDISGIEGREPFEDFVKINEELKKYSVKLWDRPQIVVANKSDLLYDDEVFEEFERKVKELGFAKVYKMSAATRDGVDEVIKEAARMLKEIPVKELEISEDEMYIPEEKRFTYVIDIEKDDEYNTYVISGTFVDRLLSAVNIHDADSLRYFHKVLKNKGIMNELREMGIEDGDVVRLNDFEFEYLL.

The Obg domain maps to 1-158 (MFIDKAKVFI…LSIVLELKLL (158 aa)). The OBG-type G domain maps to 159–331 (ADVGLLGFPN…VIKEAARMLK (173 aa)). Residues 165–172 (GFPNVGKS), 190–194 (FTTLK), 212–215 (DIPG), 282–285 (NKSD), and 312–314 (SAA) each bind GTP. Positions 172 and 192 each coordinate Mg(2+). The OCT domain occupies 345 to 428 (MYIPEEKRFT…LNDFEFEYLL (84 aa)).

It belongs to the TRAFAC class OBG-HflX-like GTPase superfamily. OBG GTPase family. As to quaternary structure, monomer. It depends on Mg(2+) as a cofactor.

The protein resides in the cytoplasm. Its function is as follows. An essential GTPase which binds GTP, GDP and possibly (p)ppGpp with moderate affinity, with high nucleotide exchange rates and a fairly low GTP hydrolysis rate. Plays a role in control of the cell cycle, stress response, ribosome biogenesis and in those bacteria that undergo differentiation, in morphogenesis control. The chain is GTPase Obg from Clostridium botulinum (strain Eklund 17B / Type B).